The chain runs to 362 residues: Divinyl chlorophyll a/b light-harvesting protein PcbF (362 aa).

Transmembrane regions (helical) follow at residues 27 to 47, 89 to 109, 150 to 170, 211 to 231, 251 to 271, and 316 to 336; these read FIGS…ANTL, IAFI…AGLL, FILG…VEWA, VMGG…FHIA, AVLS…AFWC, and LANV…WHAI.

This sequence belongs to the PsbB/PsbC family. IsiA/Pcb subfamily. As to quaternary structure, the antenna complex consists of divinyl chlorophylls (a and b) and divinyl chlorophyll a/b binding proteins and binds more divinyl chlorophyll b than does the antenna complex from high-light-adapted Prochlorococcus. The cofactor is divinyl chlorophyll a. It depends on divinyl chlorophyll b as a cofactor.

It localises to the cellular thylakoid membrane. The antenna complex functions as a light receptor, it captures and delivers excitation energy to photosystems II and I. The Prochlorales pcb genes are not related to higher plant LHCs. The protein is Divinyl chlorophyll a/b light-harvesting protein PcbF (pcbF) of Prochlorococcus marinus (strain NATL2A).